A 524-amino-acid chain; its full sequence is L-tyrosine:2-oxoglutarate aminotransferase atrD (524 aa).

Belongs to the class-I pyridoxal-phosphate-dependent aminotransferase family. Pyridoxal 5'-phosphate serves as cofactor.

It carries out the reaction L-tyrosine + 2-oxoglutarate = 3-(4-hydroxyphenyl)pyruvate + L-glutamate. It participates in secondary metabolite biosynthesis. In terms of biological role, the L-tyrosine:2-oxoglutarate aminotransferase atrD and the atromentin synthetase atrA catalyze consecutive steps to turn over L-tyrosine into atromentin, which represents the generic precursor molecule for the entire terphenylquinone and pulvinic acid family of pigments, which are widely distributed secondary metabolites in homobasidiomycetes. The first step is catalyzed by atrD which converts L-tyrosine in to 4-hydroxyphenylpyruvate (4-HPP). Adenylation of two 4-HPP monomers by the atrA adenylation (A) domain, ester bond formation between monomers and atrA, and symmetric C-C-bond formation between two monomers by atrA leads to atromentin. This is L-tyrosine:2-oxoglutarate aminotransferase atrD from Tapinella panuoides (Oyster rollrim mushroom).